Consider the following 224-residue polypeptide: Imidazoleglycerol-phosphate dehydratase (224 aa).

It belongs to the imidazoleglycerol-phosphate dehydratase family.

The catalysed reaction is D-erythro-1-(imidazol-4-yl)glycerol 3-phosphate = 3-(imidazol-4-yl)-2-oxopropyl phosphate + H2O. Its pathway is amino-acid biosynthesis; L-histidine biosynthesis; L-histidine from 5-phospho-alpha-D-ribose 1-diphosphate: step 6/9. This is Imidazoleglycerol-phosphate dehydratase (HIS3) from Komagataella pastoris (Yeast).